The sequence spans 384 residues: Carbamoyl phosphate synthase small chain (384 aa).

The segment at 1 to 192 (MIKKIPAILV…LADRNREKIY (192 aa)) is CPSase. 3 residues coordinate L-glutamine: Ser-51, Gly-244, and Gly-246. The 187-residue stretch at 196–382 (KVIVIDFGVK…IEIMKQFRKE (187 aa)) folds into the Glutamine amidotransferase type-1 domain. Cys-272 acts as the Nucleophile in catalysis. Residues Met-273, Gln-276, Asn-312, Gly-314, and Phe-315 each coordinate L-glutamine. Catalysis depends on residues His-355 and Glu-357.

It belongs to the CarA family. As to quaternary structure, composed of two chains; the small (or glutamine) chain promotes the hydrolysis of glutamine to ammonia, which is used by the large (or ammonia) chain to synthesize carbamoyl phosphate. Tetramer of heterodimers (alpha,beta)4.

Its subcellular location is the plastid. It localises to the chloroplast. The enzyme catalyses hydrogencarbonate + L-glutamine + 2 ATP + H2O = carbamoyl phosphate + L-glutamate + 2 ADP + phosphate + 2 H(+). It catalyses the reaction L-glutamine + H2O = L-glutamate + NH4(+). Its pathway is amino-acid biosynthesis; L-arginine biosynthesis; carbamoyl phosphate from bicarbonate: step 1/1. It functions in the pathway pyrimidine metabolism; UMP biosynthesis via de novo pathway; (S)-dihydroorotate from bicarbonate: step 1/3. Small subunit of the glutamine-dependent carbamoyl phosphate synthetase (CPSase). CPSase catalyzes the formation of carbamoyl phosphate from the ammonia moiety of glutamine, carbonate, and phosphate donated by ATP, constituting the first step of 2 biosynthetic pathways, one leading to arginine and/or urea and the other to pyrimidine nucleotides. The small subunit (glutamine amidotransferase) binds and cleaves glutamine to supply the large subunit with the substrate ammonia. In Porphyra purpurea (Red seaweed), this protein is Carbamoyl phosphate synthase small chain.